Consider the following 339-residue polypeptide: Cobalt-precorrin-5B C(1)-methyltransferase (339 aa).

The protein belongs to the CbiD family.

The catalysed reaction is Co-precorrin-5B + S-adenosyl-L-methionine = Co-precorrin-6A + S-adenosyl-L-homocysteine. It functions in the pathway cofactor biosynthesis; adenosylcobalamin biosynthesis; cob(II)yrinate a,c-diamide from sirohydrochlorin (anaerobic route): step 6/10. Functionally, catalyzes the methylation of C-1 in cobalt-precorrin-5B to form cobalt-precorrin-6A. The chain is Cobalt-precorrin-5B C(1)-methyltransferase from Methanosarcina acetivorans (strain ATCC 35395 / DSM 2834 / JCM 12185 / C2A).